A 174-amino-acid chain; its full sequence is Adenine phosphoribosyltransferase (174 aa).

The protein belongs to the purine/pyrimidine phosphoribosyltransferase family. In terms of assembly, homodimer.

It is found in the cytoplasm. It catalyses the reaction AMP + diphosphate = 5-phospho-alpha-D-ribose 1-diphosphate + adenine. It functions in the pathway purine metabolism; AMP biosynthesis via salvage pathway; AMP from adenine: step 1/1. Functionally, catalyzes a salvage reaction resulting in the formation of AMP, that is energically less costly than de novo synthesis. In Mycolicibacterium vanbaalenii (strain DSM 7251 / JCM 13017 / BCRC 16820 / KCTC 9966 / NRRL B-24157 / PYR-1) (Mycobacterium vanbaalenii), this protein is Adenine phosphoribosyltransferase.